The sequence spans 109 residues: Parvalbumin beta (109 aa).

2 EF-hand domains span residues lysine 38–lysine 73 and leucine 77–glycine 109. Positions 51, 53, 55, 57, 59, 62, 90, 92, 94, 96, and 101 each coordinate Ca(2+).

The protein belongs to the parvalbumin family.

Its function is as follows. In muscle, parvalbumin is thought to be involved in relaxation after contraction. It binds two calcium ions. The chain is Parvalbumin beta from Boa constrictor (Boa).